The following is a 357-amino-acid chain: Protein BMRF2 (357 aa).

At 1 to 11 (MFSCKQHLSLG) the chain is on the virion surface side. Positions 12–32 (ACVFCLGLLASTPFIWCFVFA) form a transmembrane segment. The Intravirion segment spans residues 33 to 46 (NLLSLEIFSPWQTH). A membrane pass occupies residues 47–67 (VYRLGFPTACLMAVLWTLVPA). Topologically, residues 68–70 (KHA) are virion surface. Over 71–91 (VRAVTPAIMLNIASALIFFSL) the chain traverses the membrane. The Intravirion segment spans residues 92 to 98 (RVYSTST). Residues 99–121 (WVSAPCLFLANLPLLCLWPRLAI) are membrane-embedded. Residues 122-133 (EIVYICPAIHQR) are Virion surface-facing. Over 134 to 154 (FFELGLLLACTIFALSVVSRA) the chain traverses the membrane. The Intravirion segment spans residues 155-158 (LEVS). Positions 159 to 179 (AVFMSPFFIFLALGSGSLAGA) form a transmembrane segment. Topologically, residues 180–217 (RRNQIYTSGLERRRSIFCARGDHSVASLKETLHKCPWD) are virion surface. The short motif at 199-201 (RGD) is the Integrin binding site element. At 218 to 238 (LLAISALTVLVVCVMIVLHVH) the chain is embedded in the membrane. Residues 239-240 (AE) lie on the Intravirion side of the membrane. At 241–261 (VFFGLSRYLPLFLCGAMASGG) the chain is embedded in the membrane. At 262-267 (LYLGHS) the chain is on the virion surface side. Residues 268-288 (SIIACVMATLCTLSSVVVYFL) are membrane-embedded. Over 289–298 (HETLGPLGKT) the chain is Intravirion. A membrane pass occupies residues 299–319 (VLFISIFVYYFSGVAALSAAM). Residues 320-335 (RYKLKKFVNGPLVHLR) are Virion surface-facing. Over 336-356 (VVYMCCFVFTFCEYLLVTFIK) the chain traverses the membrane. S357 is a topological domain (intravirion).

It belongs to the herpesviridae BMRF2 family. As to quaternary structure, interacts with BDLF2. Interacts with host beta1 integrin family. Extensively glycosylated by O-linked oligosaccharides.

Its subcellular location is the virion membrane. The protein resides in the host cell membrane. Facilitates virus attachment to oral epithelial cells by binding to host beta1 integrin family. Participates in rearrangement of cellular actin to increase intercellular contacts by binding BDLF2 and thereby promote virus cell-to-cell spreading. This is Protein BMRF2 from Homo sapiens (Human).